We begin with the raw amino-acid sequence, 488 residues long: Glycogen synthase (488 aa).

Lysine 17 serves as a coordination point for ADP-alpha-D-glucose.

This sequence belongs to the glycosyltransferase 1 family. Bacterial/plant glycogen synthase subfamily.

It carries out the reaction [(1-&gt;4)-alpha-D-glucosyl](n) + ADP-alpha-D-glucose = [(1-&gt;4)-alpha-D-glucosyl](n+1) + ADP + H(+). Its pathway is glycan biosynthesis; glycogen biosynthesis. In terms of biological role, synthesizes alpha-1,4-glucan chains using ADP-glucose. In Nitratidesulfovibrio vulgaris (strain DSM 19637 / Miyazaki F) (Desulfovibrio vulgaris), this protein is Glycogen synthase.